The primary structure comprises 391 residues: S-adenosylmethionine synthase (391 aa).

His14 is an ATP binding site. Residue Asp16 coordinates Mg(2+). Glu42 serves as a coordination point for K(+). Residues Glu55 and Gln98 each contribute to the L-methionine site. The flexible loop stretch occupies residues 98-108 (QSADIAMGVDE). ATP is bound by residues 172-174 (DGK), 238-239 (RF), Asp247, 253-254 (RK), Ala270, and Lys274. Asp247 contributes to the L-methionine binding site. Lys278 is a binding site for L-methionine.

It belongs to the AdoMet synthase family. As to quaternary structure, homotetramer; dimer of dimers. It depends on Mg(2+) as a cofactor. K(+) serves as cofactor.

Its subcellular location is the cytoplasm. It carries out the reaction L-methionine + ATP + H2O = S-adenosyl-L-methionine + phosphate + diphosphate. It functions in the pathway amino-acid biosynthesis; S-adenosyl-L-methionine biosynthesis; S-adenosyl-L-methionine from L-methionine: step 1/1. In terms of biological role, catalyzes the formation of S-adenosylmethionine (AdoMet) from methionine and ATP. The overall synthetic reaction is composed of two sequential steps, AdoMet formation and the subsequent tripolyphosphate hydrolysis which occurs prior to release of AdoMet from the enzyme. The chain is S-adenosylmethionine synthase from Clostridium botulinum (strain Alaska E43 / Type E3).